The following is a 505-amino-acid chain: Apolipoprotein N-acyltransferase (505 aa).

The next 6 helical transmembrane spans lie at 15 to 46 (AAFVGVITPLAFAPYQFWPLALLSPFILLLLL), 55 to 75 (ALIAYLWGIGQFAVGISWVHV), 89 to 109 (LFLMTLLVGYLALYPSLFGWL), 129 to 149 (LWLITDWLRGWVMTGFPWLWL), 161 to 181 (FAPIGGVELITLLLLFCAGSL), and 192 to 212 (MACIPLVVYATGYGLQAMQWV). The CN hydrolase domain occupies 225 to 471 (IQGNIEQGLK…TGVLKATVTP (247 aa)). The Proton acceptor role is filled by Glu-264. Lys-330 is a catalytic residue. Cys-382 acts as the Nucleophile in catalysis. The chain crosses the membrane as a helical span at residues 479–499 (FLWGTTPLYLWVGLAAGFAFW).

It belongs to the CN hydrolase family. Apolipoprotein N-acyltransferase subfamily.

Its subcellular location is the cell inner membrane. The enzyme catalyses N-terminal S-1,2-diacyl-sn-glyceryl-L-cysteinyl-[lipoprotein] + a glycerophospholipid = N-acyl-S-1,2-diacyl-sn-glyceryl-L-cysteinyl-[lipoprotein] + a 2-acyl-sn-glycero-3-phospholipid + H(+). Its pathway is protein modification; lipoprotein biosynthesis (N-acyl transfer). Functionally, catalyzes the phospholipid dependent N-acylation of the N-terminal cysteine of apolipoprotein, the last step in lipoprotein maturation. The polypeptide is Apolipoprotein N-acyltransferase (Vibrio cholerae serotype O1 (strain ATCC 39315 / El Tor Inaba N16961)).